We begin with the raw amino-acid sequence, 106 residues long: uncharacterized protein (106 aa).

Residues 1-23 (MASGAPPLTQKTPSHARRKERRR) form a disordered region. Residues 14–23 (SHARRKERRR) are compositionally biased toward basic residues.

This is an uncharacterized protein from Treponema pallidum (strain Nichols).